The chain runs to 410 residues: Dihydrolipoyllysine-residue acetyltransferase component of pyruvate dehydrogenase complex (410 aa).

In terms of domain architecture, Lipoyl-binding spans 1–69; it reads MPDIGTDLVE…TTGSLIAILN (69 aa). Position 35 is an N6-lipoyllysine (Lys35). Residues 81–100 form a disordered region; it reads SSSYSFKNSKNTSTNSNLGN. A Peripheral subunit-binding (PSBD) domain is found at 113–150; it reads HATPTVRRLARKFDIKLENITGTGRKGRILKEDVISYK. His383 is an active-site residue.

It belongs to the 2-oxoacid dehydrogenase family. Forms a 24-polypeptide structural core with octahedral symmetry. (R)-lipoate serves as cofactor.

It catalyses the reaction N(6)-[(R)-dihydrolipoyl]-L-lysyl-[protein] + acetyl-CoA = N(6)-[(R)-S(8)-acetyldihydrolipoyl]-L-lysyl-[protein] + CoA. Its function is as follows. The pyruvate dehydrogenase complex catalyzes the overall conversion of pyruvate to acetyl-CoA and CO(2). It contains multiple copies of three enzymatic components: pyruvate dehydrogenase (E1), dihydrolipoamide acetyltransferase (E2) and lipoamide dehydrogenase (E3). This is Dihydrolipoyllysine-residue acetyltransferase component of pyruvate dehydrogenase complex (aceF) from Buchnera aphidicola subsp. Baizongia pistaciae (strain Bp).